The chain runs to 311 residues: Porphobilinogen deaminase (311 aa).

Position 242 is an S-(dipyrrolylmethanemethyl)cysteine (Cys-242).

It belongs to the HMBS family. As to quaternary structure, monomer. Dipyrromethane is required as a cofactor.

It catalyses the reaction 4 porphobilinogen + H2O = hydroxymethylbilane + 4 NH4(+). It functions in the pathway porphyrin-containing compound metabolism; protoporphyrin-IX biosynthesis; coproporphyrinogen-III from 5-aminolevulinate: step 2/4. In terms of biological role, tetrapolymerization of the monopyrrole PBG into the hydroxymethylbilane pre-uroporphyrinogen in several discrete steps. The protein is Porphobilinogen deaminase of Hahella chejuensis (strain KCTC 2396).